The primary structure comprises 305 residues: UDP-3-O-acyl-N-acetylglucosamine deacetylase (305 aa).

The Zn(2+) site is built by histidine 79, histidine 238, and aspartate 242. The active-site Proton donor is the histidine 265.

The protein belongs to the LpxC family. Zn(2+) is required as a cofactor.

It catalyses the reaction a UDP-3-O-[(3R)-3-hydroxyacyl]-N-acetyl-alpha-D-glucosamine + H2O = a UDP-3-O-[(3R)-3-hydroxyacyl]-alpha-D-glucosamine + acetate. Its pathway is glycolipid biosynthesis; lipid IV(A) biosynthesis; lipid IV(A) from (3R)-3-hydroxytetradecanoyl-[acyl-carrier-protein] and UDP-N-acetyl-alpha-D-glucosamine: step 2/6. In terms of biological role, catalyzes the hydrolysis of UDP-3-O-myristoyl-N-acetylglucosamine to form UDP-3-O-myristoylglucosamine and acetate, the committed step in lipid A biosynthesis. The polypeptide is UDP-3-O-acyl-N-acetylglucosamine deacetylase (Aliivibrio fischeri (strain ATCC 700601 / ES114) (Vibrio fischeri)).